The following is a 346-amino-acid chain: DNA repair protein XRCC3 (346 aa).

N-acetylmethionine is present on methionine 1. 107–114 (GRSSAGKT) lines the ATP pocket.

It belongs to the RecA family. RAD51 subfamily. As to quaternary structure, interacts with RAD51C and RAD51. Part of the CX3 complex consisting of RAD51C and XRCC3; the complex has a ring-like structure arranged into a flat disk around a central channel; CX3 can interact with RAD51 in vitro. Forms a complex with FANCD2, BRCA2 and phosphorylated FANCG. Interacts with SWSAP1 and ZSWIM7; involved in homologous recombination repair. Interacts directly with PALB2 which may serve as a scaffold for a HR complex containing PALB2, BRCA2, RAD51C, RAD51 and XRCC3.

It is found in the nucleus. The protein localises to the cytoplasm. The protein resides in the perinuclear region. It localises to the mitochondrion. Involved in the homologous recombination repair (HRR) pathway of double-stranded DNA, thought to repair chromosomal fragmentation, translocations and deletions. Part of the RAD51 paralog protein complex CX3 which acts in the BRCA1-BRCA2-dependent HR pathway. Upon DNA damage, CX3 acts downstream of RAD51 recruitment; the complex binds predominantly to the intersection of the four duplex arms of the Holliday junction (HJ) and to junctions of replication forks. Involved in HJ resolution and thus in processing HR intermediates late in the DNA repair process; the function may be linked to the CX3 complex and seems to involve GEN1 during mitotic cell cycle progression. Part of a PALB2-scaffolded HR complex containing BRCA2 and RAD51C and which is thought to play a role in DNA repair by HR. Plays a role in regulating mitochondrial DNA copy number under conditions of oxidative stress in the presence of RAD51 and RAD51C. The chain is DNA repair protein XRCC3 (XRCC3) from Homo sapiens (Human).